The primary structure comprises 308 residues: SAP30-binding protein (308 aa).

The disordered stretch occupies residues 15-101 (AEYSDPESDG…EAEKRDPQEL (87 aa)). Phosphoserine is present on residues S18, S22, S43, and S52. Residues 57–78 (DEDGYEEEEDENSKQSEDDDSE) show a composition bias toward acidic residues. Residues 79 to 99 (TEKPEADDPKDNTEAEKRDPQ) are compositionally biased toward basic and acidic residues. K95 is covalently cross-linked (Glycyl lysine isopeptide (Lys-Gly) (interchain with G-Cter in SUMO2)). S113 is modified (phosphoserine). Glycyl lysine isopeptide (Lys-Gly) (interchain with G-Cter in SUMO2) cross-links involve residues K220, K304, and K305.

The protein belongs to the HCNGP family. As to quaternary structure, interacts with histone deacetylase complex subunit SAP30.

The protein localises to the nucleus. Functionally, plays a role in transcriptional repression by promoting histone deacetylase activity, leading to deacetylation of histone H3. May be involved in the regulation of beta-2-microglobulin genes. This chain is SAP30-binding protein (Sap30bp), found in Mus musculus (Mouse).